We begin with the raw amino-acid sequence, 176 residues long: Sperm-egg fusion protein TMEM95 (176 aa).

Positions 1–16 (MWRLALGGVFLAAAQA) are cleaved as a signal peptide. 4 disulfides stabilise this stretch: cysteine 17/cysteine 118, cysteine 20/cysteine 121, cysteine 105/cysteine 128, and cysteine 109/cysteine 134. Topologically, residues 17–145 (CVFCRLPAHD…PGSQDLWEAK (129 aa)) are extracellular. A helical membrane pass occupies residues 146–166 (ILLLSIFGAFLLLGVLSLLVE). At 167 to 176 (SHHLQAKSGL) the chain is on the cytoplasmic side.

The protein belongs to the TMEM95 family. As to quaternary structure, does not interact with sperm-egg fusion proteins IZUMO1 or IZUMO1R/JUNO. In terms of processing, N-glycosylated. Spermatozoa (at protein level).

It localises to the cytoplasmic vesicle. Its subcellular location is the secretory vesicle. The protein resides in the acrosome membrane. Its function is as follows. Sperm protein required for fusion of sperm with the egg membrane during fertilization. This is Sperm-egg fusion protein TMEM95 from Homo sapiens (Human).